Consider the following 380-residue polypeptide: Cytochrome b (380 aa).

4 consecutive transmembrane segments (helical) span residues 33–53 (FGSL…FLAM), 77–98 (WLIR…YFHI), 113–133 (WNIG…GYVL), and 178–198 (FFAF…LHLL). Positions 83 and 97 each coordinate heme b. H182 and H196 together coordinate heme b. Residue H201 coordinates a ubiquinone. Helical transmembrane passes span 226–246 (YKDL…ALFS), 288–308 (LGGV…PFLH), 320–340 (VSQF…WIGG), and 347–367 (FIII…VFFP).

This sequence belongs to the cytochrome b family. In terms of assembly, the cytochrome bc1 complex contains 3 respiratory subunits (MT-CYB, CYC1 and UQCRFS1), 2 core proteins (UQCRC1 and UQCRC2) and probably 6 low-molecular weight proteins. Requires heme b as cofactor.

The protein localises to the mitochondrion inner membrane. Functionally, component of the ubiquinol-cytochrome c reductase complex (complex III or cytochrome b-c1 complex) that is part of the mitochondrial respiratory chain. The b-c1 complex mediates electron transfer from ubiquinol to cytochrome c. Contributes to the generation of a proton gradient across the mitochondrial membrane that is then used for ATP synthesis. This is Cytochrome b (mt-cyb) from Sarda sarda (Atlantic bonito).